A 364-amino-acid chain; its full sequence is MAQQTPLYEQHTLCGARMVDFHSWMMPLHYGSQIDEHHAVRTDAGMFDVSHMTIVDLRGSRTREFLRYLLANDVAKLTKSGKALYSGMLNASGGVIDDLIVYYFTEDFFRLVVNSATREKDLSWITQHAEPFGIEITVRDDLSMIAVQGPNAQAKAATLFNDAQRQVVEGMKPFFGVQVGDLFIATTGYTGEAGYEIALPNEKAADFWRALVEAGVKPCGLGARDTLRLEAGMNLYGQEMDETISPLAANMGWTIAWEPTDRDFIGREALEVQREHGTEKLVGLVMTEKGVLRNELPVRFTDAQGNQHEGIITSGTFSPTLGYSIALARVPEGIGETAIVQIRNREMPVKVTKPVFVRNGKAVA.

It belongs to the GcvT family. As to quaternary structure, the glycine cleavage system is composed of four proteins: P, T, L and H.

It catalyses the reaction N(6)-[(R)-S(8)-aminomethyldihydrolipoyl]-L-lysyl-[protein] + (6S)-5,6,7,8-tetrahydrofolate = N(6)-[(R)-dihydrolipoyl]-L-lysyl-[protein] + (6R)-5,10-methylene-5,6,7,8-tetrahydrofolate + NH4(+). Its function is as follows. The glycine cleavage system catalyzes the degradation of glycine. The chain is Aminomethyltransferase from Shigella flexneri serotype 5b (strain 8401).